The primary structure comprises 219 residues: Adenylate kinase (219 aa).

ATP is bound at residue Gly-10–Thr-15. The tract at residues Ala-30–Val-59 is NMP. AMP is bound by residues Thr-31, Arg-36, Gln-57–Val-59, Gly-85–Arg-88, and Gln-92. Residues Gly-126 to Asp-164 are LID. ATP-binding positions include Arg-127 and Val-137–Phe-138. Residues Arg-161 and Arg-172 each contribute to the AMP site. An ATP-binding site is contributed by Gly-200.

Belongs to the adenylate kinase family. As to quaternary structure, monomer.

It is found in the cytoplasm. It catalyses the reaction AMP + ATP = 2 ADP. Its pathway is purine metabolism; AMP biosynthesis via salvage pathway; AMP from ADP: step 1/1. Its function is as follows. Catalyzes the reversible transfer of the terminal phosphate group between ATP and AMP. Plays an important role in cellular energy homeostasis and in adenine nucleotide metabolism. The chain is Adenylate kinase from Streptomyces griseus subsp. griseus (strain JCM 4626 / CBS 651.72 / NBRC 13350 / KCC S-0626 / ISP 5235).